The following is a 162-amino-acid chain: ATP synthase subunit delta, mitochondrial (162 aa).

The transit peptide at 1-24 (MFSVARTAIRGAARPAVRIARRGY) directs the protein to the mitochondrion.

As to quaternary structure, F-type ATP synthases have 2 components, the catalytic core F(1) and the membrane-embedded component F(0), linked together by a central stalk and a peripheral stalk. The central stalk, also called rotor shaft, is often seen as part of F(1). The peripheral stalk is seen as part of F(0). F(0) contains the membrane channel next to the rotor. F-type ATP synthases form dimers but each monomer functions independently in ATP generation. The dimer consists of 17 different polypeptides: ATP1 (subunit alpha, 3 molecules per monomer, part of F(1)), ATP2 (subunit beta, 3 copies per monomer, part of F(1)), ATP3 (subunit gamma, part of the central stalk), ATP4 (subunit b, part of the peripheral stalk), ATP5/OSCP (subunit 5/OSCP, part of the peripheral stalk), ATP6 (subunit a, part of the peripheral stalk), ATP7 (subunit d, part of the peripheral stalk), ATP8 (subunit 8, part of the peripheral stalk), OLI1 (subunit c, part of the rotor, 10 molecules per monomer), ATP14 (subunit h, part of the peripheral stalk), ATP15 (subunit epsilon, part of the central stalk), ATP16 (subunit delta, part of the central stalk), ATP17 (subunit f, part of the peripheral stalk), ATP18 (subunit i/j, part of the peripheral stalk), ATP19 (subunit k, dimer-specific, at interface between monomers), ATP20 (subunit g, at interface between monomers), TIM11 (subunit e, at interface between monomers).

Its subcellular location is the mitochondrion inner membrane. Its function is as follows. Mitochondrial membrane ATP synthase (F(1)F(0) ATP synthase or Complex V) produces ATP from ADP in the presence of a proton gradient across the membrane which is generated by electron transport complexes of the respiratory chain. F-type ATP synthases consist of two structural domains, F(1) - containing the extramembraneous catalytic core, and F(0) - containing the membrane proton channel, linked together by a central stalk and a peripheral stalk. During catalysis, ATP synthesis in the catalytic domain of F(1) is coupled via a rotary mechanism of the central stalk subunits to proton translocation. Part of the complex F(1) domain and the central stalk which is part of the complex rotary element. Rotation of the central stalk against the surrounding alpha/ATP1(3)beta/ATP2(3) subunits leads to hydrolysis of ATP in three separate catalytic sites on the beta/ATP2 subunits. In Yarrowia lipolytica (strain CLIB 122 / E 150) (Yeast), this protein is ATP synthase subunit delta, mitochondrial.